An 87-amino-acid polypeptide reads, in one-letter code: Phosphocarrier protein HPr (87 aa).

The region spanning 2-87 (ASKDFHIVAE…NETMTKEGLA (86 aa)) is the HPr domain. The active-site Pros-phosphohistidine intermediate is H15. Residue S46 is modified to Phosphoserine; by HPrK/P.

It belongs to the HPr family.

The protein localises to the cytoplasm. Its activity is regulated as follows. Phosphorylation on Ser-46 inhibits the phosphoryl transfer from enzyme I to HPr. Its function is as follows. General (non sugar-specific) component of the phosphoenolpyruvate-dependent sugar phosphotransferase system (sugar PTS). This major carbohydrate active-transport system catalyzes the phosphorylation of incoming sugar substrates concomitantly with their translocation across the cell membrane. The phosphoryl group from phosphoenolpyruvate (PEP) is transferred to the phosphoryl carrier protein HPr by enzyme I. Phospho-HPr then transfers it to the PTS EIIA domain. In terms of biological role, P-Ser-HPr interacts with the catabolite control protein A (CcpA), forming a complex that binds to DNA at the catabolite response elements cre, operator sites preceding a large number of catabolite-regulated genes. Thus, P-Ser-HPr is a corepressor in carbon catabolite repression (CCR), a mechanism that allows bacteria to coordinate and optimize the utilization of available carbon sources. P-Ser-HPr also plays a role in inducer exclusion, in which it probably interacts with several non-PTS permeases and inhibits their transport activity. The sequence is that of Phosphocarrier protein HPr (ptsH) from Streptococcus mutans serotype c (strain ATCC 700610 / UA159).